Consider the following 245-residue polypeptide: Small ribosomal subunit protein uS2 (245 aa).

The protein belongs to the universal ribosomal protein uS2 family.

The protein is Small ribosomal subunit protein uS2 of Pseudomonas fluorescens (strain ATCC BAA-477 / NRRL B-23932 / Pf-5).